Reading from the N-terminus, the 392-residue chain is NAD(P)H-quinone oxidoreductase subunit H (392 aa).

It belongs to the complex I 49 kDa subunit family. In terms of assembly, NDH-1 can be composed of about 15 different subunits; different subcomplexes with different compositions have been identified which probably have different functions.

It localises to the cellular thylakoid membrane. The enzyme catalyses a plastoquinone + NADH + (n+1) H(+)(in) = a plastoquinol + NAD(+) + n H(+)(out). It carries out the reaction a plastoquinone + NADPH + (n+1) H(+)(in) = a plastoquinol + NADP(+) + n H(+)(out). Its function is as follows. NDH-1 shuttles electrons from an unknown electron donor, via FMN and iron-sulfur (Fe-S) centers, to quinones in the respiratory and/or the photosynthetic chain. The immediate electron acceptor for the enzyme in this species is believed to be plastoquinone. Couples the redox reaction to proton translocation, and thus conserves the redox energy in a proton gradient. Cyanobacterial NDH-1 also plays a role in inorganic carbon-concentration. This is NAD(P)H-quinone oxidoreductase subunit H from Synechococcus sp. (strain JA-2-3B'a(2-13)) (Cyanobacteria bacterium Yellowstone B-Prime).